A 391-amino-acid chain; its full sequence is GTPase Obg (391 aa).

The Obg domain occupies 1-159 (MKFVDEASIL…RDLLLELMLL (159 aa)). The segment at 127 to 147 (NTRFKSSVNRTPRQKTNGTPG) is disordered. Positions 129–145 (RFKSSVNRTPRQKTNGT) are enriched in polar residues. The OBG-type G domain maps to 160–333 (ADVGMLGMPN…LCWDVMTFII (174 aa)). GTP contacts are provided by residues 166–173 (GMPNAGKS), 191–195 (FTTLV), 213–216 (DIPG), 283–286 (NKID), and 314–316 (SAA). The Mg(2+) site is built by S173 and T193.

It belongs to the TRAFAC class OBG-HflX-like GTPase superfamily. OBG GTPase family. In terms of assembly, monomer. Requires Mg(2+) as cofactor.

The protein resides in the cytoplasm. An essential GTPase which binds GTP, GDP and possibly (p)ppGpp with moderate affinity, with high nucleotide exchange rates and a fairly low GTP hydrolysis rate. Plays a role in control of the cell cycle, stress response, ribosome biogenesis and in those bacteria that undergo differentiation, in morphogenesis control. The polypeptide is GTPase Obg (Salmonella arizonae (strain ATCC BAA-731 / CDC346-86 / RSK2980)).